A 306-amino-acid chain; its full sequence is Mycothiol acetyltransferase (306 aa).

N-acetyltransferase domains lie at Glu-5–Ala-157 and Ile-159–Leu-306. Glu-36 is a 1D-myo-inositol 2-(L-cysteinylamino)-2-deoxy-alpha-D-glucopyranoside binding site. Residue Met-82–Val-84 participates in acetyl-CoA binding. Residues Asp-186, Lys-227, and Glu-238 each contribute to the 1D-myo-inositol 2-(L-cysteinylamino)-2-deoxy-alpha-D-glucopyranoside site. Leu-242 to Val-244 is a binding site for acetyl-CoA. 1D-myo-inositol 2-(L-cysteinylamino)-2-deoxy-alpha-D-glucopyranoside is bound at residue Tyr-276. Asn-281–Arg-286 is an acetyl-CoA binding site.

It belongs to the acetyltransferase family. MshD subfamily. As to quaternary structure, monomer.

It catalyses the reaction 1D-myo-inositol 2-(L-cysteinylamino)-2-deoxy-alpha-D-glucopyranoside + acetyl-CoA = mycothiol + CoA + H(+). Functionally, catalyzes the transfer of acetyl from acetyl-CoA to desacetylmycothiol (Cys-GlcN-Ins) to form mycothiol. The sequence is that of Mycothiol acetyltransferase from Stackebrandtia nassauensis (strain DSM 44728 / CIP 108903 / NRRL B-16338 / NBRC 102104 / LLR-40K-21).